Reading from the N-terminus, the 477-residue chain is Membrane-bound lytic murein transglycosylase F (477 aa).

Positions 1-22 are cleaved as a signal peptide; it reads MTRFLLIIILGFLLTACQQVTV. The non-LT domain stretch occupies residues 23–257; it reads DEPEFVPHQL…HLNEKYFGHV (235 aa). Residues 258–477 form an LT domain region; the sequence is KRFDYIDTRA…AGSLSPDQPK (220 aa). E302 is a catalytic residue. The segment at 446–477 is disordered; that stretch reads SKQPMPEDEQNDLIAEELPSMPAGSLSPDQPK. A compositionally biased stretch (acidic residues) spans 451-460; it reads PEDEQNDLIA.

In the N-terminal section; belongs to the bacterial solute-binding protein 3 family. The protein in the C-terminal section; belongs to the transglycosylase Slt family.

It localises to the cell outer membrane. It carries out the reaction Exolytic cleavage of the (1-&gt;4)-beta-glycosidic linkage between N-acetylmuramic acid (MurNAc) and N-acetylglucosamine (GlcNAc) residues in peptidoglycan, from either the reducing or the non-reducing ends of the peptidoglycan chains, with concomitant formation of a 1,6-anhydrobond in the MurNAc residue.. Its function is as follows. Murein-degrading enzyme that degrades murein glycan strands and insoluble, high-molecular weight murein sacculi, with the concomitant formation of a 1,6-anhydromuramoyl product. Lytic transglycosylases (LTs) play an integral role in the metabolism of the peptidoglycan (PG) sacculus. Their lytic action creates space within the PG sacculus to allow for its expansion as well as for the insertion of various structures such as secretion systems and flagella. This Shewanella sp. (strain W3-18-1) protein is Membrane-bound lytic murein transglycosylase F.